The primary structure comprises 103 residues: UPF0145 protein PTH_2690 (103 aa).

Belongs to the UPF0145 family.

The polypeptide is UPF0145 protein PTH_2690 (Pelotomaculum thermopropionicum (strain DSM 13744 / JCM 10971 / SI)).